Reading from the N-terminus, the 236-residue chain is Uridylate kinase (236 aa).

10-13 lines the ATP pocket; sequence KLSG. A UMP-binding site is contributed by Gly-52. Residues Gly-53 and Arg-57 each contribute to the ATP site. UMP is bound by residues Asp-72 and 133-140; that span reads TGNPFFTT. 3 residues coordinate ATP: Thr-160, Tyr-166, and Asp-169.

This sequence belongs to the UMP kinase family. In terms of assembly, homohexamer.

It localises to the cytoplasm. It carries out the reaction UMP + ATP = UDP + ADP. It participates in pyrimidine metabolism; CTP biosynthesis via de novo pathway; UDP from UMP (UMPK route): step 1/1. Its activity is regulated as follows. Inhibited by UTP. In terms of biological role, catalyzes the reversible phosphorylation of UMP to UDP. The sequence is that of Uridylate kinase from Parabacteroides distasonis (strain ATCC 8503 / DSM 20701 / CIP 104284 / JCM 5825 / NCTC 11152).